A 331-amino-acid chain; its full sequence is 6-phosphogluconolactonase (331 aa).

The residue at position 287 (Lys-287) is an N6-acetyllysine.

This sequence belongs to the cycloisomerase 2 family.

It carries out the reaction 6-phospho-D-glucono-1,5-lactone + H2O = 6-phospho-D-gluconate + H(+). The protein operates within carbohydrate degradation; pentose phosphate pathway; D-ribulose 5-phosphate from D-glucose 6-phosphate (oxidative stage): step 2/3. Its function is as follows. Catalyzes the hydrolysis of 6-phosphogluconolactone to 6-phosphogluconate. The sequence is that of 6-phosphogluconolactonase from Escherichia coli O7:K1 (strain IAI39 / ExPEC).